The sequence spans 504 residues: Maturase K (504 aa).

The protein belongs to the intron maturase 2 family. MatK subfamily.

The protein localises to the plastid. Its subcellular location is the chloroplast. In terms of biological role, usually encoded in the trnK tRNA gene intron. Probably assists in splicing its own and other chloroplast group II introns. In Berzelia lanuginosa (Buttonbush), this protein is Maturase K.